A 248-amino-acid chain; its full sequence is 5'-nucleotidase SurE (248 aa).

A divalent metal cation is bound by residues aspartate 8, aspartate 9, serine 39, and asparagine 91.

It belongs to the SurE nucleotidase family. A divalent metal cation serves as cofactor.

The protein localises to the cytoplasm. The enzyme catalyses a ribonucleoside 5'-phosphate + H2O = a ribonucleoside + phosphate. Nucleotidase that shows phosphatase activity on nucleoside 5'-monophosphates. The polypeptide is 5'-nucleotidase SurE (Neisseria gonorrhoeae (strain ATCC 700825 / FA 1090)).